A 346-amino-acid chain; its full sequence is UDP-N-acetylenolpyruvoylglucosamine reductase (346 aa).

An FAD-binding PCMH-type domain is found at 23–194; the sequence is FDVRAQFACR…TSVTFRLPKV (172 aa). Residue Arg170 is part of the active site. The active-site Proton donor is Ser246. Glu342 is an active-site residue.

It belongs to the MurB family. Requires FAD as cofactor.

It is found in the cytoplasm. The catalysed reaction is UDP-N-acetyl-alpha-D-muramate + NADP(+) = UDP-N-acetyl-3-O-(1-carboxyvinyl)-alpha-D-glucosamine + NADPH + H(+). The protein operates within cell wall biogenesis; peptidoglycan biosynthesis. Its function is as follows. Cell wall formation. The sequence is that of UDP-N-acetylenolpyruvoylglucosamine reductase from Paraburkholderia phytofirmans (strain DSM 17436 / LMG 22146 / PsJN) (Burkholderia phytofirmans).